A 132-amino-acid chain; its full sequence is MVMTDPIADYLTRIRNANMVRHESLEVPASRIKKDISEILKREGFIRDYEVIEDDKQGIIRVFLKYGKNNERVISGLKRISKPGLRNYVKANEVPKVLNGLGIAIISTSNGVVTDKEAREKAAGGEVLAYVW.

Belongs to the universal ribosomal protein uS8 family. Part of the 30S ribosomal subunit. Contacts proteins S5 and S12.

One of the primary rRNA binding proteins, it binds directly to 16S rRNA central domain where it helps coordinate assembly of the platform of the 30S subunit. The chain is Small ribosomal subunit protein uS8 from Latilactobacillus sakei subsp. sakei (strain 23K) (Lactobacillus sakei subsp. sakei).